The primary structure comprises 884 residues: Probable LRR receptor-like serine/threonine-protein kinase PAM74 (884 aa).

A signal peptide spans 1–23 (MDSPCWLLLLLLGAFAIIGCVQA). Topologically, residues 24-510 (QDQQEFISLD…TEKNSKKKFP (487 aa)) are extracellular. N-linked (GlcNAc...) asparagine glycans are attached at residues asparagine 143, asparagine 182, asparagine 200, asparagine 256, asparagine 289, asparagine 400, asparagine 403, asparagine 417, asparagine 433, asparagine 444, asparagine 465, and asparagine 470. LRR repeat units lie at residues 412–433 (RVLSLNLSSSGLTGIIAAAIQN), 436–457 (HLEKLDLSNNTLTGVVPEFLAQ), and 460–480 (SLVIINLSGNNLSGPLPQGLR). A helical transmembrane segment spans residues 511-531 (VVIVASVASVAIIVAVLVIIF). Over 532–884 (VLSKKKSSTV…FDTELFPRAR (353 aa)) the chain is Cytoplasmic. Threonine 570 carries the post-translational modification Phosphothreonine. In terms of domain architecture, Protein kinase spans 579-852 (NNFQRVVGEG…QVANELKECL (274 aa)). ATP contacts are provided by residues 585-593 (VGEGGFGVV) and lysine 607. Tyrosine 652 bears the Phosphotyrosine mark. Aspartate 704 (proton acceptor) is an active-site residue. Serine 738 is subject to Phosphoserine. 2 positions are modified to phosphothreonine: threonine 739 and threonine 744. Tyrosine 752 is modified (phosphotyrosine).

This sequence belongs to the protein kinase superfamily. Ser/Thr protein kinase family. In terms of assembly, binds to the ammonium transporter AMT1-1.

The protein resides in the membrane. It catalyses the reaction L-seryl-[protein] + ATP = O-phospho-L-seryl-[protein] + ADP + H(+). It carries out the reaction L-threonyl-[protein] + ATP = O-phospho-L-threonyl-[protein] + ADP + H(+). Functionally, required for accurate photosynthesis. In Arabidopsis thaliana (Mouse-ear cress), this protein is Probable LRR receptor-like serine/threonine-protein kinase PAM74 (PAM74).